Reading from the N-terminus, the 36-residue chain is Photosystem I reaction center subunit VIII (36 aa).

The chain crosses the membrane as a helical span at residues 9-29; it reads ILVPLVGLVFPAVTMASLFLY.

Belongs to the PsaI family.

It localises to the plastid. Its subcellular location is the chloroplast thylakoid membrane. May help in the organization of the PsaL subunit. The polypeptide is Photosystem I reaction center subunit VIII (Staurastrum punctulatum (Green alga)).